A 497-amino-acid polypeptide reads, in one-letter code: MEKEKWWFNSMLFNRELEYRCGLSKSTDGIGPIGNTNGSEDPVIDKNIHCWGDSDSSSCNNVDRLFGVRGIRNFISDDTFLVRDSNGDNYSIYFDIENHIFEIDNDRYELESSFSSYLNSSYLNTGSKSNNHYYDRYMYDTKYSWNNHINSCIDNYLDSEIRINSYFSSGGDNYSKSYIYSYICSESVNSIANASSDIKTSANESDSHESDSHMRGKYNDLDINKKYRHLWVQCENCYGLNYKKFFRSKFNICEQCGYHLKMSSSDRIELSIDPGTWDPMDDDMVSVDPIEFHSEEEPYKDRIDSYQKKTGLTEAVQTGIGQLNGIPIAIGVMDFQFMGGSMGSVVGEKITRLIEYATNRSLPVIIVCASGGARMQEGSLSLMQMAKISSASYNYQSNKKLLYVSILTSPTTGGVTASFGMLGDIIIAEPNAYIAFAGKRVIEQTLNKIVPDGSQAAEYLFHKGLFDPIVPRNLLKGVLSELFQLHGFFPVNSNSIK.

In terms of domain architecture, CoA carboxyltransferase N-terminal spans 230–497 (LWVQCENCYG…FFPVNSNSIK (268 aa)). Zn(2+) contacts are provided by C234, C237, C253, and C256. The segment at 234–256 (CENCYGLNYKKFFRSKFNICEQC) adopts a C4-type zinc-finger fold.

This sequence belongs to the AccD/PCCB family. In terms of assembly, acetyl-CoA carboxylase is a heterohexamer composed of biotin carboxyl carrier protein, biotin carboxylase and 2 subunits each of ACCase subunit alpha and ACCase plastid-coded subunit beta (accD). Zn(2+) serves as cofactor.

The protein resides in the plastid. It is found in the chloroplast stroma. It carries out the reaction N(6)-carboxybiotinyl-L-lysyl-[protein] + acetyl-CoA = N(6)-biotinyl-L-lysyl-[protein] + malonyl-CoA. It functions in the pathway lipid metabolism; malonyl-CoA biosynthesis; malonyl-CoA from acetyl-CoA: step 1/1. Its function is as follows. Component of the acetyl coenzyme A carboxylase (ACC) complex. Biotin carboxylase (BC) catalyzes the carboxylation of biotin on its carrier protein (BCCP) and then the CO(2) group is transferred by the transcarboxylase to acetyl-CoA to form malonyl-CoA. The chain is Acetyl-coenzyme A carboxylase carboxyl transferase subunit beta, chloroplastic from Nandina domestica (Heavenly bamboo).